The primary structure comprises 265 residues: RING finger protein 208 (265 aa).

The tract at residues 83–106 (MPTLEGASHTPPLPRRPRKGSSEL) is disordered. The residue at position 103 (S103) is a Phosphoserine. The RING-type zinc finger occupies 147–194 (CPTCGHTYNVTQRRPRVLSCLHSVCEQCLQILYESCPKYKFISCPTCH).

The chain is RING finger protein 208 (Rnf208) from Mus musculus (Mouse).